The sequence spans 298 residues: uncharacterized protein (298 aa).

Positions Met1–Met17 are enriched in basic and acidic residues. The disordered stretch occupies residues Met1–Gln22. The 61-residue stretch at Asn167–Leu227 folds into the S1 motif domain.

This is an uncharacterized protein from Bacillus subtilis (strain 168).